A 430-amino-acid polypeptide reads, in one-letter code: uncharacterized protein (430 aa).

It is found in the cytoplasm. It localises to the nucleus. This is an uncharacterized protein from Schizosaccharomyces pombe (strain 972 / ATCC 24843) (Fission yeast).